Here is a 255-residue protein sequence, read N- to C-terminus: Thiazole synthase (255 aa).

Lysine 95 serves as the catalytic Schiff-base intermediate with DXP. Residues glycine 156, 182-183 (AG), and 204-205 (NT) contribute to the 1-deoxy-D-xylulose 5-phosphate site.

The protein belongs to the ThiG family. As to quaternary structure, homotetramer. Forms heterodimers with either ThiH or ThiS.

It localises to the cytoplasm. It carries out the reaction [ThiS sulfur-carrier protein]-C-terminal-Gly-aminoethanethioate + 2-iminoacetate + 1-deoxy-D-xylulose 5-phosphate = [ThiS sulfur-carrier protein]-C-terminal Gly-Gly + 2-[(2R,5Z)-2-carboxy-4-methylthiazol-5(2H)-ylidene]ethyl phosphate + 2 H2O + H(+). The protein operates within cofactor biosynthesis; thiamine diphosphate biosynthesis. Its function is as follows. Catalyzes the rearrangement of 1-deoxy-D-xylulose 5-phosphate (DXP) to produce the thiazole phosphate moiety of thiamine. Sulfur is provided by the thiocarboxylate moiety of the carrier protein ThiS. In vitro, sulfur can be provided by H(2)S. The chain is Thiazole synthase from Aeromonas salmonicida (strain A449).